We begin with the raw amino-acid sequence, 691 residues long: UvrABC system protein C (691 aa).

In terms of domain architecture, GIY-YIG spans 20-97 (STSGVYLWKD…IKKHTPRYNI (78 aa)). The region spanning 204-239 (DATVARLEKRMKRAVRQEAFEAAARIRDDIQAIRCI) is the UVR domain. Positions 662–691 (RSTTAPVREEYKEHEHDPQGESPGPGRKTD) are disordered. Over residues 668–680 (VREEYKEHEHDPQ) the composition is skewed to basic and acidic residues.

Belongs to the UvrC family. In terms of assembly, interacts with UvrB in an incision complex.

It localises to the cytoplasm. The UvrABC repair system catalyzes the recognition and processing of DNA lesions. UvrC both incises the 5' and 3' sides of the lesion. The N-terminal half is responsible for the 3' incision and the C-terminal half is responsible for the 5' incision. In Treponema pallidum (strain Nichols), this protein is UvrABC system protein C.